A 344-amino-acid polypeptide reads, in one-letter code: N-acetyl-gamma-glutamyl-phosphate reductase (344 aa).

The active site involves cysteine 149.

It belongs to the NAGSA dehydrogenase family. Type 1 subfamily.

It is found in the cytoplasm. The enzyme catalyses N-acetyl-L-glutamate 5-semialdehyde + phosphate + NADP(+) = N-acetyl-L-glutamyl 5-phosphate + NADPH + H(+). Its pathway is amino-acid biosynthesis; L-arginine biosynthesis; N(2)-acetyl-L-ornithine from L-glutamate: step 3/4. Its function is as follows. Catalyzes the NADPH-dependent reduction of N-acetyl-5-glutamyl phosphate to yield N-acetyl-L-glutamate 5-semialdehyde. In Thermoanaerobacter sp. (strain X514), this protein is N-acetyl-gamma-glutamyl-phosphate reductase.